A 298-amino-acid chain; its full sequence is Leucine-rich repeat-containing protein 55 (298 aa).

An N-terminal signal peptide occupies residues 1-34 (MGDTWAQLPWPGPPHSALLLVFFLLAAGVMHSDA). Residues 35–65 (GTSCPVLCTCRNQVVDCSNQRLFSVPPDLPM) form the LRRNT domain. Disulfide bonds link C38–C44 and C42–C51. LRR repeat units follow at residues 66–87 (DTRNLSLAHNRIAAVPPGYLTC), 90–111 (ELRVLDLRNNSLMELPPGLFLH), 114–135 (RLAHLDLSYNNLSHVPADMFRE), 138–160 (GLVHIDLSHNPWLRRVHPQAFQG), and 163–186 (HLRDLDLSYGGLAFLSLEALEGLP). One can recognise an LRRCT domain in the interval 196–251 (NPWVCGCTMEPLLKWLRNRIQRCTADSQLAECRGPPEVEGAPLFSLTEESFKACHL). 2 cysteine pairs are disulfide-bonded: C200–C227 and C202–C249. Residues 259–279 (LFIAFVGFVVSIASVATNFLL) traverse the membrane as a helical segment.

As to quaternary structure, interacts with KCNMA1.

The protein localises to the cell membrane. In terms of biological role, auxiliary protein of the large-conductance, voltage and calcium-activated potassium channel (BK alpha). Modulates gating properties by producing a marked shift in the BK channel's voltage dependence of activation in the hyperpolarizing direction, and in the absence of calcium. This chain is Leucine-rich repeat-containing protein 55 (Lrrc55), found in Mus musculus (Mouse).